Here is an 858-residue protein sequence, read N- to C-terminus: Protein lines (858 aa).

The interval Met1–Ser102 is disordered. 2 stretches are compositionally biased toward low complexity: residues Ser20–Ser30 and Leu65–Ser102.

Belongs to the protein lines family. As to quaternary structure, interacts with drm. As to expression, expressed throughout the embryo, including the hindgut, posterior midgut and embryonic epidermis.

Its subcellular location is the cytoplasm. It is found in the nucleus. Its function is as follows. Has a dual role as a segment polarity protein and as a modulator of the Abd-B protein. Required for Abd-B to activate the transcription of genes (including ems, cut and sal) that are involved in posterior spiracle morphogenesis. Also required for Abd-B to form an eighth abdominal denticle belt. Acts in a hierarchy downstream of drm and upstream of bowl during foregut and hindgut patterning and morphogenesis. Involved in cell rearrangement during elongation of the embryonic hindgut. Required to regulate expression of embryonic hindgut patterning genes in order to establish the large intestine and at least some rectum, and to repress small intestine fate. Required for late wingless (wg)-dependent cell fate specification in the dorsal embryonic epidermis. Acts in concert with wg to regulate expression of wg itself and also to regulate wg-target genes. May have a role in ventral epidermal patterning, independent of wg signaling. This chain is Protein lines, found in Drosophila melanogaster (Fruit fly).